Here is a 251-residue protein sequence, read N- to C-terminus: tRNA pseudouridine synthase A (251 aa).

Asp52 serves as the catalytic Nucleophile. Position 113 (Tyr113) interacts with substrate.

This sequence belongs to the tRNA pseudouridine synthase TruA family. As to quaternary structure, homodimer.

It catalyses the reaction uridine(38/39/40) in tRNA = pseudouridine(38/39/40) in tRNA. Its function is as follows. Formation of pseudouridine at positions 38, 39 and 40 in the anticodon stem and loop of transfer RNAs. The sequence is that of tRNA pseudouridine synthase A from Brucella anthropi (strain ATCC 49188 / DSM 6882 / CCUG 24695 / JCM 21032 / LMG 3331 / NBRC 15819 / NCTC 12168 / Alc 37) (Ochrobactrum anthropi).